A 304-amino-acid chain; its full sequence is Tyrosine recombinase XerC (304 aa).

The 87-residue stretch at 6–92 folds into the Core-binding (CB) domain; that stretch reads NKLYLQAQAY…VLRQWFAYLV (87 aa). A Tyr recombinase domain is found at 113–292; it reads HLPKNIDAER…DFQHLAKIYD (180 aa). Active-site residues include Arg152, Lys176, His244, Arg247, and His270. Tyr279 serves as the catalytic O-(3'-phospho-DNA)-tyrosine intermediate.

This sequence belongs to the 'phage' integrase family. XerC subfamily. Forms a cyclic heterotetrameric complex composed of two molecules of XerC and two molecules of XerD.

It localises to the cytoplasm. Its function is as follows. Site-specific tyrosine recombinase, which acts by catalyzing the cutting and rejoining of the recombining DNA molecules. The XerC-XerD complex is essential to convert dimers of the bacterial chromosome into monomers to permit their segregation at cell division. It also contributes to the segregational stability of plasmids. This chain is Tyrosine recombinase XerC, found in Haemophilus ducreyi (strain 35000HP / ATCC 700724).